Here is a 296-residue protein sequence, read N- to C-terminus: 4-hydroxy-tetrahydrodipicolinate synthase (296 aa).

Residue Thr-49 coordinates pyruvate. Catalysis depends on Tyr-137, which acts as the Proton donor/acceptor. Catalysis depends on Lys-166, which acts as the Schiff-base intermediate with substrate. Ile-208 lines the pyruvate pocket.

It belongs to the DapA family. Homotetramer; dimer of dimers.

The protein localises to the cytoplasm. It catalyses the reaction L-aspartate 4-semialdehyde + pyruvate = (2S,4S)-4-hydroxy-2,3,4,5-tetrahydrodipicolinate + H2O + H(+). The protein operates within amino-acid biosynthesis; L-lysine biosynthesis via DAP pathway; (S)-tetrahydrodipicolinate from L-aspartate: step 3/4. Functionally, catalyzes the condensation of (S)-aspartate-beta-semialdehyde [(S)-ASA] and pyruvate to 4-hydroxy-tetrahydrodipicolinate (HTPA). In Chlorobium phaeobacteroides (strain DSM 266 / SMG 266 / 2430), this protein is 4-hydroxy-tetrahydrodipicolinate synthase.